The following is an 855-amino-acid chain: DNA mismatch repair protein MutS (855 aa).

Position 613-620 (613-620 (GPNMGGKS)) interacts with ATP. Positions 796–816 (TTSLPHEMPSQQSGKPASPMQ) are disordered.

This sequence belongs to the DNA mismatch repair MutS family.

This protein is involved in the repair of mismatches in DNA. It is possible that it carries out the mismatch recognition step. This protein has a weak ATPase activity. This is DNA mismatch repair protein MutS from Pseudomonas aeruginosa (strain LESB58).